A 246-amino-acid chain; its full sequence is Exosome complex component Rrp41 (246 aa).

The protein belongs to the RNase PH family. Rrp41 subfamily. Component of the archaeal exosome complex. Forms a hexameric ring-like arrangement composed of 3 Rrp41-Rrp42 heterodimers. The hexameric ring associates with a trimer of Rrp4 and/or Csl4 subunits.

It localises to the cytoplasm. Catalytic component of the exosome, which is a complex involved in RNA degradation. Has 3'-&gt;5' exoribonuclease activity. Can also synthesize heteromeric RNA-tails. In Pyrobaculum neutrophilum (strain DSM 2338 / JCM 9278 / NBRC 100436 / V24Sta) (Thermoproteus neutrophilus), this protein is Exosome complex component Rrp41.